The primary structure comprises 470 residues: Protein nucleotidyltransferase YdiU (470 aa).

ATP is bound by residues Gly-86, Gly-88, Arg-89, Lys-109, Asp-121, Gly-122, Arg-172, and Arg-179. Asp-244 functions as the Proton acceptor in the catalytic mechanism. Asn-245 and Asp-254 together coordinate Mg(2+). Asp-254 lines the ATP pocket.

This sequence belongs to the SELO family. Mg(2+) is required as a cofactor. The cofactor is Mn(2+).

It carries out the reaction L-seryl-[protein] + ATP = 3-O-(5'-adenylyl)-L-seryl-[protein] + diphosphate. It catalyses the reaction L-threonyl-[protein] + ATP = 3-O-(5'-adenylyl)-L-threonyl-[protein] + diphosphate. The enzyme catalyses L-tyrosyl-[protein] + ATP = O-(5'-adenylyl)-L-tyrosyl-[protein] + diphosphate. The catalysed reaction is L-histidyl-[protein] + UTP = N(tele)-(5'-uridylyl)-L-histidyl-[protein] + diphosphate. It carries out the reaction L-seryl-[protein] + UTP = O-(5'-uridylyl)-L-seryl-[protein] + diphosphate. It catalyses the reaction L-tyrosyl-[protein] + UTP = O-(5'-uridylyl)-L-tyrosyl-[protein] + diphosphate. In terms of biological role, nucleotidyltransferase involved in the post-translational modification of proteins. It can catalyze the addition of adenosine monophosphate (AMP) or uridine monophosphate (UMP) to a protein, resulting in modifications known as AMPylation and UMPylation. The sequence is that of Protein nucleotidyltransferase YdiU from Roseobacter denitrificans (strain ATCC 33942 / OCh 114) (Erythrobacter sp. (strain OCh 114)).